We begin with the raw amino-acid sequence, 274 residues long: Formamidopyrimidine-DNA glycosylase (274 aa).

P2 serves as the catalytic Schiff-base intermediate with DNA. Catalysis depends on E3, which acts as the Proton donor. The active-site Proton donor; for beta-elimination activity is K60. Residues H93 and R112 each contribute to the DNA site. The FPG-type zinc-finger motif lies at 240 to 274; sequence DVYGRKGETCRQCGTPITKTVVGGRGTHFCSVCQK. Catalysis depends on R264, which acts as the Proton donor; for delta-elimination activity.

This sequence belongs to the FPG family. Monomer. Requires Zn(2+) as cofactor.

It catalyses the reaction Hydrolysis of DNA containing ring-opened 7-methylguanine residues, releasing 2,6-diamino-4-hydroxy-5-(N-methyl)formamidopyrimidine.. The catalysed reaction is 2'-deoxyribonucleotide-(2'-deoxyribose 5'-phosphate)-2'-deoxyribonucleotide-DNA = a 3'-end 2'-deoxyribonucleotide-(2,3-dehydro-2,3-deoxyribose 5'-phosphate)-DNA + a 5'-end 5'-phospho-2'-deoxyribonucleoside-DNA + H(+). In terms of biological role, involved in base excision repair of DNA damaged by oxidation or by mutagenic agents. Acts as a DNA glycosylase that recognizes and removes damaged bases. Has a preference for oxidized purines, such as 7,8-dihydro-8-oxoguanine (8-oxoG). Has AP (apurinic/apyrimidinic) lyase activity and introduces nicks in the DNA strand. Cleaves the DNA backbone by beta-delta elimination to generate a single-strand break at the site of the removed base with both 3'- and 5'-phosphates. This Halalkalibacterium halodurans (strain ATCC BAA-125 / DSM 18197 / FERM 7344 / JCM 9153 / C-125) (Bacillus halodurans) protein is Formamidopyrimidine-DNA glycosylase (mutM).